Reading from the N-terminus, the 235-residue chain is Aspartate/glutamate leucyltransferase (235 aa).

Belongs to the R-transferase family. Bpt subfamily.

Its subcellular location is the cytoplasm. The enzyme catalyses N-terminal L-glutamyl-[protein] + L-leucyl-tRNA(Leu) = N-terminal L-leucyl-L-glutamyl-[protein] + tRNA(Leu) + H(+). It carries out the reaction N-terminal L-aspartyl-[protein] + L-leucyl-tRNA(Leu) = N-terminal L-leucyl-L-aspartyl-[protein] + tRNA(Leu) + H(+). Functionally, functions in the N-end rule pathway of protein degradation where it conjugates Leu from its aminoacyl-tRNA to the N-termini of proteins containing an N-terminal aspartate or glutamate. In Pseudomonas savastanoi pv. phaseolicola (strain 1448A / Race 6) (Pseudomonas syringae pv. phaseolicola (strain 1448A / Race 6)), this protein is Aspartate/glutamate leucyltransferase.